Consider the following 74-residue polypeptide: Putative membrane protein insertion efficiency factor (74 aa).

It belongs to the UPF0161 family.

It is found in the cell inner membrane. Functionally, could be involved in insertion of integral membrane proteins into the membrane. The sequence is that of Putative membrane protein insertion efficiency factor from Anaeromyxobacter sp. (strain Fw109-5).